A 187-amino-acid chain; its full sequence is GTP cyclohydrolase 1 (187 aa).

The Zn(2+) site is built by C76, H79, and C148.

This sequence belongs to the GTP cyclohydrolase I family. Homomer.

The catalysed reaction is GTP + H2O = 7,8-dihydroneopterin 3'-triphosphate + formate + H(+). The protein operates within cofactor biosynthesis; 7,8-dihydroneopterin triphosphate biosynthesis; 7,8-dihydroneopterin triphosphate from GTP: step 1/1. This is GTP cyclohydrolase 1 from Desulforamulus reducens (strain ATCC BAA-1160 / DSM 100696 / MI-1) (Desulfotomaculum reducens).